A 108-amino-acid chain; its full sequence is Large ribosomal subunit protein uL24 (108 aa).

The protein belongs to the universal ribosomal protein uL24 family. In terms of assembly, part of the 50S ribosomal subunit.

Functionally, one of two assembly initiator proteins, it binds directly to the 5'-end of the 23S rRNA, where it nucleates assembly of the 50S subunit. In terms of biological role, one of the proteins that surrounds the polypeptide exit tunnel on the outside of the subunit. In Citrifermentans bemidjiense (strain ATCC BAA-1014 / DSM 16622 / JCM 12645 / Bem) (Geobacter bemidjiensis), this protein is Large ribosomal subunit protein uL24.